A 398-amino-acid polypeptide reads, in one-letter code: Secreted aspartic protease 3 (398 aa).

The first 18 residues, 1–18 (MFLKNIFIALAIALLADA), serve as a signal peptide directing secretion. Positions 19–58 (TPTTFNNSPGFVALNFDVIKTHKNVTGPQGEINTNVNVKR) are cleaved as a propeptide — activation peptide. A glycan (N-linked (GlcNAc...) asparagine) is linked at N42. Positions 72–384 (YASDITVGSN…DLDDNEISLA (313 aa)) constitute a Peptidase A1 domain. D90 is an active-site residue. A pepstatin A-binding site is contributed by 90-92 (DTG). The segment covering 103–112 (VSCQAGQGQD) has biased composition (polar residues). The segment at 103–139 (VSCQAGQGQDPNFCKNEGTYSPSSSSSSQNLNSPFSI) is disordered. C105 and C116 are joined by a disulfide. Residues 123–138 (SPSSSSSSQNLNSPFS) show a composition bias toward low complexity. 140-143 (EYGD) contributes to the pepstatin A binding site. Positions 188, 248, 254, and 270 each coordinate Zn(2+). Residue D274 is part of the active site. A pepstatin A-binding site is contributed by 274-278 (DSGTT). C312 and C350 are disulfide-bonded. N-linked (GlcNAc...) asparagine glycosylation occurs at N313.

The protein belongs to the peptidase A1 family. Monomer.

The protein localises to the secreted. The enzyme catalyses Preferential cleavage at the carboxyl of hydrophobic amino acids, but fails to cleave 15-Leu-|-Tyr-16, 16-Tyr-|-Leu-17 and 24-Phe-|-Phe-25 of insulin B chain. Activates trypsinogen, and degrades keratin.. Inhibited by pepstatin A analogs. Its function is as follows. Secreted aspartic peptidases (SAPs) are a group of ten acidic hydrolases considered as key virulence factors. These enzymes supply the fungus with nutrient amino acids as well as are able to degrade the selected host's proteins involved in the immune defense. Induces host inflammatory cytokine production in a proteolytic activity-independent way. Moreover, acts toward human hemoglobin though limited proteolysis to generate a variety of antimicrobial hemocidins, enabling to compete with the other microorganisms of the same physiological niche using the microbicidal peptides generated from the host protein. In terms of biological role, plays a key role in defense against host by cleaving histatin-5 (Hst 5), a peptide from human saliva that carries out fungicidal activity. The cleavage rate decreases in an order of SAP2 &gt; SAP9 &gt; SAP3 &gt; SAP7 &gt; SAP4 &gt; SAP1 &gt; SAP8. The first cleavage occurs between residues 'Lys-17' and 'His-18' of Hst 5, giving DSHAKRHHGYKRKFHEK and HHSHRGY peptides. Simultaneously, the DSHAKRHHGYKRK peptide is also formed. Further fragmentation by SAP3 results in DSHAKRHHGY and KRKFHEK products. The sequence is that of Secreted aspartic protease 3 from Candida albicans (strain SC5314 / ATCC MYA-2876) (Yeast).